The primary structure comprises 242 residues: Large ribosomal subunit protein uL1 (242 aa).

It belongs to the universal ribosomal protein uL1 family. In terms of assembly, part of the 50S ribosomal subunit.

In terms of biological role, binds directly to 23S rRNA. The L1 stalk is quite mobile in the ribosome, and is involved in E site tRNA release. Its function is as follows. Protein L1 is also a translational repressor protein, it controls the translation of the L11 operon by binding to its mRNA. The protein is Large ribosomal subunit protein uL1 of Streptomyces sp. (strain FRI-5).